A 729-amino-acid polypeptide reads, in one-letter code: 1,4-alpha-glucan branching enzyme GlgB 2 (729 aa).

Residue Asp-408 is the Nucleophile of the active site. The active-site Proton donor is Glu-461.

This sequence belongs to the glycosyl hydrolase 13 family. GlgB subfamily. In terms of assembly, monomer.

It carries out the reaction Transfers a segment of a (1-&gt;4)-alpha-D-glucan chain to a primary hydroxy group in a similar glucan chain.. Its pathway is glycan biosynthesis; glycogen biosynthesis. In terms of biological role, catalyzes the formation of the alpha-1,6-glucosidic linkages in glycogen by scission of a 1,4-alpha-linked oligosaccharide from growing alpha-1,4-glucan chains and the subsequent attachment of the oligosaccharide to the alpha-1,6 position. The protein is 1,4-alpha-glucan branching enzyme GlgB 2 of Xanthomonas campestris pv. campestris (strain 8004).